A 309-amino-acid chain; its full sequence is Homoserine kinase (309 aa).

Residue Pro-91–Cys-101 participates in ATP binding.

The protein belongs to the GHMP kinase family. Homoserine kinase subfamily.

Its subcellular location is the cytoplasm. The enzyme catalyses L-homoserine + ATP = O-phospho-L-homoserine + ADP + H(+). It functions in the pathway amino-acid biosynthesis; L-threonine biosynthesis; L-threonine from L-aspartate: step 4/5. Its function is as follows. Catalyzes the ATP-dependent phosphorylation of L-homoserine to L-homoserine phosphate. The sequence is that of Homoserine kinase from Erwinia tasmaniensis (strain DSM 17950 / CFBP 7177 / CIP 109463 / NCPPB 4357 / Et1/99).